The following is a 612-amino-acid chain: DEAD-box ATP-dependent RNA helicase 11 (612 aa).

2 disordered regions span residues 1–70 (MSAS…SGGG) and 83–104 (GAGG…WDRR). Position 2 is an N-acetylserine (serine 2). Composition is skewed to gly residues over residues 61–70 (SGGGGASGGG) and 83–94 (GAGGGGGGGGGW). The Q motif signature appears at 151–179 (NTFADIDLGDALNLNIRRCKYVRPTPVQR). One can recognise a Helicase ATP-binding domain in the interval 182–366 (IPILLAERDL…ADFMSNYIFL (185 aa)). 195–202 (AQTGSGKT) provides a ligand contact to ATP. Positions 310–313 (DEAD) match the DEAD box motif. A Helicase C-terminal domain is found at 377-542 (LITQRVEFVQ…EVPEWLTRYA (166 aa)). The disordered stretch occupies residues 547–583 (FGGGKKRSGGRFGGRDFRREGSYSRGGGGGGGGGGSD). A compositionally biased stretch (basic and acidic residues) spans 559–568 (GGRDFRREGS). Residues 570 to 583 (SRGGGGGGGGGGSD) show a composition bias toward gly residues.

Belongs to the DEAD box helicase family. DDX3/DED1 subfamily.

The enzyme catalyses ATP + H2O = ADP + phosphate + H(+). This chain is DEAD-box ATP-dependent RNA helicase 11 (RH11), found in Arabidopsis thaliana (Mouse-ear cress).